A 279-amino-acid polypeptide reads, in one-letter code: tRNA (carboxymethyluridine(34)-5-O)-methyltransferase (279 aa).

The disordered stretch occupies residues 172-236 (KSKSKPKTKS…QQQDQEQERE (65 aa)). A compositionally biased stretch (basic and acidic residues) spans 200 to 229 (PKERSEYLQRWKEEQQRSKSLDDNDEKQQQ).

In terms of assembly, interacts with TRM112.

The protein resides in the cytoplasm. Its subcellular location is the nucleus. The enzyme catalyses 5-(carboxymethyl)uridine(34) in tRNA + S-adenosyl-L-methionine = 5-(2-methoxy-2-oxoethyl)uridine(34) in tRNA + S-adenosyl-L-homocysteine. Required for the methylation of the wobble bases at position 34 in tRNA. Appears to have a role in stress-response. The sequence is that of tRNA (carboxymethyluridine(34)-5-O)-methyltransferase (TRM9) from Saccharomyces cerevisiae (strain ATCC 204508 / S288c) (Baker's yeast).